The sequence spans 463 residues: ATP synthase subunit beta 1 (463 aa).

Residue 152 to 159 participates in ATP binding; it reads GGAGVGKT.

This sequence belongs to the ATPase alpha/beta chains family. F-type ATPases have 2 components, CF(1) - the catalytic core - and CF(0) - the membrane proton channel. CF(1) has five subunits: alpha(3), beta(3), gamma(1), delta(1), epsilon(1). CF(0) has three main subunits: a(1), b(2) and c(9-12). The alpha and beta chains form an alternating ring which encloses part of the gamma chain. CF(1) is attached to CF(0) by a central stalk formed by the gamma and epsilon chains, while a peripheral stalk is formed by the delta and b chains.

The protein resides in the cell inner membrane. It carries out the reaction ATP + H2O + 4 H(+)(in) = ADP + phosphate + 5 H(+)(out). Its function is as follows. Produces ATP from ADP in the presence of a proton gradient across the membrane. The catalytic sites are hosted primarily by the beta subunits. This is ATP synthase subunit beta 1 from Shewanella frigidimarina (strain NCIMB 400).